Reading from the N-terminus, the 281-residue chain is Probable feruloyl esterase A (281 aa).

Residues 1–21 form the signal peptide; sequence MKQFSAKYALILLATAGQALA. 3 disulfides stabilise this stretch: Cys50–Cys279, Cys112–Cys115, and Cys248–Cys255. Asp98 is a binding site for substrate. N-linked (GlcNAc...) asparagine glycosylation occurs at Asn100. Tyr101 serves as a coordination point for substrate. Ser154 serves as the catalytic Nucleophile. Asp215 functions as the Charge relay system in the catalytic mechanism. A substrate-binding site is contributed by His268. Catalysis depends on His268, which acts as the Charge relay system.

This sequence belongs to the AB hydrolase superfamily. FaeA family.

It localises to the secreted. The enzyme catalyses feruloyl-polysaccharide + H2O = ferulate + polysaccharide.. Functionally, involved in degradation of plant cell walls. Hydrolyzes the feruloyl-arabinose ester bond in arabinoxylans, and the feruloyl-galactose ester bond in pectin. The sequence is that of Probable feruloyl esterase A (faeA) from Aspergillus niger (strain ATCC MYA-4892 / CBS 513.88 / FGSC A1513).